The sequence spans 438 residues: Death-associated inhibitor of apoptosis 1 (438 aa).

A BIR 1 repeat occupies 44–110 (EETRLKTFTD…QRWSPNCPLL (67 aa)). Positions 194–213 (TATQATGDVQPETCRPSAAS) are disordered. One copy of the BIR 2 repeat lies at 226-293 (ETARLRTFEA…ALWLSQCRFV (68 aa)). Zn(2+) contacts are provided by cysteine 263, cysteine 266, histidine 283, and cysteine 290. The tract at residues 322-346 (GGVAVASTQASEEEQQTSLSSEEAV) is disordered. Residues 327–345 (ASTQASEEEQQTSLSSEEA) are compositionally biased toward low complexity. An RING-type zinc finger spans residues 391 to 426 (CKICYGAEYNTAFLPCGHVVACAKCASSVTKCPLCR).

This sequence belongs to the IAP family. In terms of assembly, interacts (via BIR 2 domain) with Dronc (via residues 114-125). Rpr, hid and grim can outcompete Dronc for binding Diap1 therefore removing Diap1-mediated ubiquitination. Interacts (via BIR 2 domain) with HtrA2; this displaces any bound Dronc. Interacts with Strica. The N-terminally cleaved form interacts with Ubr3 (via UBR-type zinc finger); the interaction promotes the recruitment and uniquitination of substrate capases such as Dronc. Ubiquitinated and degraded by HtrA2 in apoptotic cells; proteolytic cleavage at specific sites in the BIR domain linker region generating inactive fragments. Mutation of one site reduces but does not abolish cleavage as another site is selected by the protease.

The enzyme catalyses S-ubiquitinyl-[E2 ubiquitin-conjugating enzyme]-L-cysteine + [acceptor protein]-L-lysine = [E2 ubiquitin-conjugating enzyme]-L-cysteine + N(6)-ubiquitinyl-[acceptor protein]-L-lysine.. In terms of biological role, anti-apoptotic protein which functions as a caspase regulator, using its E3 ubiquitin-protein ligase activity to smother caspase activity. Binds, ubiquitinates and inactivates initiator caspase Dronc, and effector caspases Drice and Dcp-1. Acts as a Nedd8-E3 ubiquitin-protein ligase for Drice. Suppresses apoptosis by targeting the apoptosome for ubiquitination and inactivation. Plays an important role in cell motility. Overexpression suppresses rpr and hid-dependent cell death in the eye. Interaction of Diap1 with Dronc is required to suppress Dronc-mediated cell death through Diap1-mediated ubiquitination of Dronc. Acts as a positive regulator of Wnt signaling. This Drosophila melanogaster (Fruit fly) protein is Death-associated inhibitor of apoptosis 1 (Diap1).